We begin with the raw amino-acid sequence, 201 residues long: Holliday junction resolvase RecU (201 aa).

T87, D89, E102, and Q121 together coordinate Mg(2+).

Belongs to the RecU family. The cofactor is Mg(2+).

It localises to the cytoplasm. It catalyses the reaction Endonucleolytic cleavage at a junction such as a reciprocal single-stranded crossover between two homologous DNA duplexes (Holliday junction).. Its function is as follows. Endonuclease that resolves Holliday junction intermediates in genetic recombination. Cleaves mobile four-strand junctions by introducing symmetrical nicks in paired strands. Promotes annealing of linear ssDNA with homologous dsDNA. Required for DNA repair, homologous recombination and chromosome segregation. This chain is Holliday junction resolvase RecU, found in Listeria welshimeri serovar 6b (strain ATCC 35897 / DSM 20650 / CCUG 15529 / CIP 8149 / NCTC 11857 / SLCC 5334 / V8).